A 432-amino-acid chain; its full sequence is Neuronal pentraxin-2 (432 aa).

The N-terminal stretch at M1–A14 is a signal peptide. 2 N-linked (GlcNAc...) asparagine glycosylation sites follow: N149 and N190. In terms of domain architecture, Pentraxin (PTX) spans D224 to C425. The cysteines at positions 254 and 314 are disulfide-linked. Ca(2+) contacts are provided by N278, E356, Q357, D358, and Q368. Residue N394 is glycosylated (N-linked (GlcNAc...) asparagine).

In terms of assembly, homooligomer or heterooligomer (probably pentamer) with neuronal pentraxin receptor (NPTXR). The cofactor is Ca(2+).

Its subcellular location is the secreted. Its function is as follows. Likely to play role in the modification of cellular properties that underlie long-term plasticity. Binds to agar matrix in a calcium-dependent manner. The chain is Neuronal pentraxin-2 (Nptx2) from Rattus norvegicus (Rat).